A 368-amino-acid chain; its full sequence is Aspartate-semialdehyde dehydrogenase (368 aa).

Residues 10–13 (RGMV), 37–38 (TS), and glutamine 74 contribute to the NADP(+) site. Arginine 103 is a binding site for phosphate. The active-site Acyl-thioester intermediate is cysteine 136. The residue at position 136 (cysteine 136) is an S-cysteinyl cysteine; in inhibited form. Residue glutamine 163 coordinates substrate. NADP(+)-binding positions include 166–167 (SG) and proline 194. Glutamate 242 provides a ligand contact to substrate. Lysine 245 contributes to the phosphate binding site. Substrate is bound at residue arginine 268. The Proton acceptor role is filled by histidine 275. Glutamine 351 provides a ligand contact to NADP(+).

Belongs to the aspartate-semialdehyde dehydrogenase family. As to quaternary structure, homodimer.

The enzyme catalyses L-aspartate 4-semialdehyde + phosphate + NADP(+) = 4-phospho-L-aspartate + NADPH + H(+). Its pathway is amino-acid biosynthesis; L-lysine biosynthesis via DAP pathway; (S)-tetrahydrodipicolinate from L-aspartate: step 2/4. The protein operates within amino-acid biosynthesis; L-methionine biosynthesis via de novo pathway; L-homoserine from L-aspartate: step 2/3. It participates in amino-acid biosynthesis; L-threonine biosynthesis; L-threonine from L-aspartate: step 2/5. Catalyzes the NADPH-dependent formation of L-aspartate-semialdehyde (L-ASA) by the reductive dephosphorylation of L-aspartyl-4-phosphate. This chain is Aspartate-semialdehyde dehydrogenase, found in Salmonella typhi.